We begin with the raw amino-acid sequence, 653 residues long: Potassium voltage-gated channel subfamily A member 4 (653 aa).

The Cytoplasmic segment spans residues 1 to 304 (MEVAMVSAES…LLFEYPESSS (304 aa)). Residues 24–148 (QARARERERL…RFYYSEDDHG (125 aa)) form a disordered region. The span at 36–52 (SRAAAAAAVAAATAAVE) shows a compositional bias: low complexity. The segment covering 81-97 (GSRRRRRQRSEKKKAHY) has biased composition (basic residues). Ser90 carries the post-translational modification Phosphoserine; by PKA. Ser122 carries the phosphoserine modification. The span at 122-137 (SEEEEDEEEEEEEEEE) shows a compositional bias: acidic residues. A helical membrane pass occupies residues 305 to 326 (PARGIAIVSVLVILISIVIFCL). At 327-370 (ETLPEFRDDRDLVMALSAGGHGGLLNDTSAPHLENSGHTIFNDP) the chain is on the extracellular side. N-linked (GlcNAc...) asparagine glycosylation is present at Asn352. The helical transmembrane segment at 371–392 (FFIVETVCIVWFSFEFVVRCFA) threads the bilayer. The Cytoplasmic portion of the chain corresponds to 393 to 403 (CPSQALFFKNI). Residues 404 to 424 (MNIIDIVSILPYFITLGTDLA) traverse the membrane as a helical segment. At 425–439 (QQQGGGNGQQQQAMS) the chain is on the extracellular side. The helical; Voltage-sensor transmembrane segment at 440–460 (FAILRIIRLVRVFRIFKLSRH) threads the bilayer. Over 461 to 475 (SKGLQILGHTLRASM) the chain is Cytoplasmic. The S4-S5 linker stretch occupies residues 462 to 475 (KGLQILGHTLRASM). Residues 476–497 (RELGLLIFFLFIGVILFSSAVY) form a helical membrane-spanning segment. The Extracellular segment spans residues 498–511 (FAEADEPTTHFQSI). An intramembrane region (helical) is located at residues 512-523 (PDAFWWAVVTMT). Residues 524–529 (TVGYGD) carry the Selectivity filter motif. The stretch at 524–531 (TVGYGDMK) is an intramembrane region. Over 532 to 538 (PITVGGK) the chain is Extracellular. Residues 539–567 (IVGSLCAIAGVLTIALPVPVIVSNFNYFY) traverse the membrane as a helical segment. Topologically, residues 568 to 653 (HRETENEEQT…SNAKAVETDV (86 aa)) are cytoplasmic. Phosphoserine; by PKA is present on Ser599. Basic and acidic residues predominate over residues 629–640 (CQGKGDDSETDK). Positions 629–653 (CQGKGDDSETDKNNCSNAKAVETDV) are disordered. Residues 651–653 (TDV) carry the PDZ-binding motif.

It belongs to the potassium channel family. A (Shaker) (TC 1.A.1.2) subfamily. Kv1.4/KCNA4 sub-subfamily. Homotetramer and heterotetramer of potassium channel proteins. Interacts with KCNAB1 and KCNAB2. Interacts with DLG1, DLG2 and DLG4 via their PDZ domains. Interacts with SIGMAR1. Detected in a complex with KCNA1. Interacts with KCNA2. Part of a complex containing KCNA1, KCNAB1 and LGI1. Interacts (via cytoplasmic N-terminal domain) with KCNRG. In terms of tissue distribution, expressed in brain, and at lower levels in the testis, lung, kidney, colon and heart. Detected in heart ventricle.

The protein localises to the cell membrane. Its subcellular location is the cell projection. It is found in the axon. It catalyses the reaction K(+)(in) = K(+)(out). Inhibited by 4-aminopyridine (4-AP), but not by tetraethylammonium (TEA) and charybdotoxin (CTX). In terms of biological role, voltage-gated potassium channel that mediates transmembrane potassium transport in excitable membranes. Forms tetrameric potassium-selective channels through which potassium ions pass in accordance with their electrochemical gradient. The channel alternates between opened and closed conformations in response to the voltage difference across the membrane. Can form functional homotetrameric channels and heterotetrameric channels that contain variable proportions of KCNA1, KCNA2, KCNA4, KCNA5, and possibly other family members as well; channel properties depend on the type of alpha subunits that are part of the channel. Channel properties are modulated by cytoplasmic beta subunits that regulate the subcellular location of the alpha subunits and promote rapid inactivation. In vivo, membranes probably contain a mixture of heteromeric potassium channel complexes, making it difficult to assign currents observed in intact tissues to any particular potassium channel family member. Homotetrameric KCNA4 forms a potassium channel that opens in response to membrane depolarization, followed by rapid spontaneous channel closure. Likewise, a heterotetrameric channel formed by KCNA1 and KCNA4 shows rapid inactivation. The polypeptide is Potassium voltage-gated channel subfamily A member 4 (KCNA4) (Homo sapiens (Human)).